The sequence spans 234 residues: 2-amino-5-formylamino-6-ribosylaminopyrimidin-4(3H)-one 5'-monophosphate deformylase (234 aa).

The Fe cation site is built by glutamate 30, histidine 32, aspartate 41, and histidine 111.

This sequence belongs to the creatininase superfamily. FAPy deformylase family. As to quaternary structure, homodimer. Requires Fe(2+) as cofactor. Zn(2+) is required as a cofactor.

The enzyme catalyses 2-amino-5-formylamino-6-(5-phospho-D-ribosylamino)pyrimidin-4(3H)-one + H2O = 2,5-diamino-6-(1-D-ribosylamino)pyrimidin-4(3H)-one 5'-phosphate + formate + H(+). The protein operates within cofactor biosynthesis; coenzyme F420 biosynthesis. Its pathway is cofactor biosynthesis; riboflavin biosynthesis. In terms of biological role, catalyzes the hydrolysis of the formamide of 2-amino-5-formylamino-6-ribosylamino-4(3H)-pyrimidinone 5'-monophosphate (FAPy) to form 2,5-diamino-6-ribosylamino-4(3H)-pyrimidinone 5'-phosphate (APy). The chain is 2-amino-5-formylamino-6-ribosylaminopyrimidin-4(3H)-one 5'-monophosphate deformylase from Methanothermobacter thermautotrophicus (strain ATCC 29096 / DSM 1053 / JCM 10044 / NBRC 100330 / Delta H) (Methanobacterium thermoautotrophicum).